Reading from the N-terminus, the 486-residue chain is Catalase (486 aa).

Residues M1–P28 are disordered. Residues H54 and N127 contribute to the active site. Residue Y337 coordinates heme.

Belongs to the catalase family. In terms of assembly, homodimer. It depends on heme as a cofactor.

The catalysed reaction is 2 H2O2 = O2 + 2 H2O. Its function is as follows. Decomposes hydrogen peroxide into water and oxygen; serves to protect cells from the toxic effects of hydrogen peroxide. May be involved in aerotolerance of B.fragilis. The protein is Catalase (katA) of Bacteroides fragilis (strain YCH46).